We begin with the raw amino-acid sequence, 89 residues long: Small ribosomal subunit protein uS15 (89 aa).

Belongs to the universal ribosomal protein uS15 family. Part of the 30S ribosomal subunit. Forms a bridge to the 50S subunit in the 70S ribosome, contacting the 23S rRNA.

In terms of biological role, one of the primary rRNA binding proteins, it binds directly to 16S rRNA where it helps nucleate assembly of the platform of the 30S subunit by binding and bridging several RNA helices of the 16S rRNA. Its function is as follows. Forms an intersubunit bridge (bridge B4) with the 23S rRNA of the 50S subunit in the ribosome. The protein is Small ribosomal subunit protein uS15 of Oenococcus oeni (strain ATCC BAA-331 / PSU-1).